The chain runs to 900 residues: Phospholipase DDHD1 (900 aa).

Disordered regions lie at residues 1-28 (MNYP…ELGS), 100-152 (LRYY…GGPA), and 202-233 (GARP…DEDR). A phosphoserine mark is found at Ser-8 and Ser-11. A compositionally biased stretch (gly residues) spans 130–140 (SGGGGATGGSP). Ser-537 is an active-site residue. One can recognise a DDHD domain in the interval 611-886 (LKFKVENFFC…ALFLLTFMYK (276 aa)). Disordered stretches follow at residues 706-725 (AKEP…PSPV) and 768-801 (SSTT…TQTL). The segment covering 710–725 (TSVSENEGISTIPSPV) has biased composition (polar residues). A Phosphoserine modification is found at Ser-723. Over residues 776-787 (TSKDSMEDEKKP) the composition is skewed to basic and acidic residues. A compositionally biased stretch (polar residues) spans 791–801 (PSATTVGTQTL).

The protein belongs to the PA-PLA1 family. In terms of assembly, forms homooligomers and, to a much smaller extent, heterooligomers with DDHD2. As to expression, highly expressed in testis. Also expressed in brain, spleen and lung. Only expressed in cerebellum in fetal brain.

The protein localises to the cytoplasm. It catalyses the reaction a 1,2-diacyl-sn-glycero-3-phosphate + H2O = a 2-acyl-sn-glycerol 3-phosphate + a fatty acid + H(+). It carries out the reaction a 1,2-diacyl-sn-glycero-3-phospho-(1D-myo-inositol) + H2O = a 2-acyl-sn-glycero-3-phospho-D-myo-inositol + a fatty acid + H(+). The enzyme catalyses 1-octadecanoyl-2-(5Z,8Z,11Z,14Z-eicosatetraenoyl)-sn-glycero-3-phospho-(1D-myo-inositol) + H2O = 2-(5Z,8Z,11Z,14Z-eicosatetraenoyl)-sn-glycero-3-phospho-(1D-myo-inositol) + octadecanoate + H(+). The catalysed reaction is a 1-acyl-2-(5Z,8Z,11Z,14Z-eicosatetraenoyl)-sn-glycero-3-phospho-(1D-myo-inositol) + H2O = 2-(5Z,8Z,11Z,14Z-eicosatetraenoyl)-sn-glycero-3-phospho-(1D-myo-inositol) + a fatty acid + H(+). It catalyses the reaction 1,2-dihexadecanoyl-sn-glycero-3-phospho-(1D-myo-inositol) + H2O = 2-hexadecanoyl-sn-glycero-3-phospho-(1D-myo-inositol) + hexadecanoate + H(+). It carries out the reaction a 1-acyl-2-(5Z,8Z,11Z,14Z)-eicosatetraenoyl-sn-glycero-3-phosphate + H2O = 2-(5Z,8Z,11Z,14Z-eicosatetraenoyl)-sn-glycero-3-phosphate + a fatty acid + H(+). The enzyme catalyses 1,2-di-(9Z-octadecenoyl)-sn-glycero-3-phosphate + H2O = 2-(9Z-octadecenoyl)-sn-glycero-3-phosphate + (9Z)-octadecenoate + H(+). The catalysed reaction is 1-hexadecanoyl-2-(9Z-octadecenoyl)-sn-glycero-3-phosphate + H2O = 2-(9Z-octadecenoyl)-sn-glycero-3-phosphate + hexadecanoate + H(+). It catalyses the reaction 1-hexadecanoyl-2-(9Z-octadecenoyl)-sn-glycero-3-phospho-L-serine + H2O = 2-(9Z-octadecenoyl)-sn-glycero-3-phospho-L-serine + hexadecanoate + H(+). It carries out the reaction 1,2-di-(5Z,8Z,11Z,14Z)-eicosatetraenoyl-sn-glycero-3-phosphate + H2O = 2-(5Z,8Z,11Z,14Z-eicosatetraenoyl)-sn-glycero-3-phosphate + (5Z,8Z,11Z,14Z)-eicosatetraenoate + H(+). The enzyme catalyses 1-octadecanoyl-2-(5Z,8Z,11Z,14Z-eicosatetraenoyl)-sn-glycero-3-phosphate + H2O = 2-(5Z,8Z,11Z,14Z-eicosatetraenoyl)-sn-glycero-3-phosphate + octadecanoate + H(+). The catalysed reaction is a 1,2-diacyl-sn-glycero-3-phosphocholine + H2O = a 2-acyl-sn-glycero-3-phosphocholine + a fatty acid + H(+). It catalyses the reaction a 1,2-diacyl-sn-glycero-3-phosphoethanolamine + H2O = a 2-acyl-sn-glycero-3-phosphoethanolamine + a fatty acid + H(+). It carries out the reaction a 1,2-diacyl-sn-glycero-3-phospho-L-serine + H2O = a 2-acyl-sn-glycero-3-phospho-L-serine + a fatty acid + H(+). The enzyme catalyses a 1,2-diacyl-sn-glycero-3-phospho-(1'-sn-glycerol) + H2O = 2-acyl-sn-glycero-3-phospho-(1'-sn-glycerol) + a fatty acid + H(+). The catalysed reaction is 1-hexadecanoyl-2-(9Z-octadecenoyl)-sn-glycero-3-phospho-(1'-sn-glycerol) + H2O = 2-(9Z-octadecenoyl)-sn-glycero-3-phospho-(1'-sn-glycerol) + hexadecanoate + H(+). It catalyses the reaction 1-acyl-2-(5Z,8Z,11Z,14Z-eicosatetraenoyl)-sn-glycero-3-phosphocholine + H2O = 2-(5Z,8Z,11Z,14Z)-eicosatetraenoyl-sn-glycero-3-phosphocholine + a fatty acid + H(+). It carries out the reaction 1-acyl-2-(5Z,8Z,11Z,14Z)-eicosatetraenoyl-sn-glycero-3-phosphoethanolamine + H2O = 2-(5Z,8Z,11Z,14Z)-eicosatetraenoyl-sn-glycero-3-phosphoethanolamine + a fatty acid + H(+). The enzyme catalyses 1-(9Z-octadecenoyl)-2-(7Z,10Z,13Z,16Z,19Z-docosapentaenoyl)-sn-glycero-3-phospho-1D-myo-inositol + H2O = 2-(7Z,10Z,13Z,16Z,19Z-docosapentaenoyl)-sn-glycero-3-phospho-1D-myo-inositol + (9Z)-octadecenoate + H(+). The catalysed reaction is 1-(9Z-octadecenoyl)-2-(5Z,8Z,11Z,14Z-eicosatetraenoyl)-sn-glycero-3-phospho-1D-myo-inositol + H2O = 2-(5Z,8Z,11Z,14Z-eicosatetraenoyl)-sn-glycero-3-phospho-(1D-myo-inositol) + (9Z)-octadecenoate + H(+). It catalyses the reaction 1,2-di-(9Z-octadecenoyl)-sn-glycero-3-phospho-1D-myo-inositol + H2O = 2-(9Z-octadecenoyl)-sn-glycero-3-phospho-1D-myo-inositol + (9Z)-octadecenoate + H(+). It carries out the reaction 1-(9Z-octadecenoyl)-2-(8Z,11Z,14Z-eicosatrienoyl)-sn-glycero-3-phospho-1D-myo-inositol + H2O = 2-(8Z,11Z,14Z-eicosatrienoyl)-sn-glycero-3-phospho-1D-myo-inositol + (9Z)-octadecenoate + H(+). The enzyme catalyses 1,2-di-(9Z-octadecenoyl)-sn-glycero-3-phosphocholine + H2O = (9Z-octadecenoyl)-sn-glycero-3-phosphocholine + (9Z)-octadecenoate + H(+). Its pathway is phospholipid metabolism; phosphatidylinositol metabolism. Phosphatidate (1,2-diacyl-sn-glycero-3-phosphate, PA) can positively regulate phospholipase A1 activity. Functionally, phospholipase A1 (PLA1) that hydrolyzes ester bonds at the sn-1 position of glycerophospholipids producing a free fatty acid and a lysophospholipid. Prefers phosphatidate (1,2-diacyl-sn-glycero-3-phosphate, PA) as substrate in vitro, but can efficiently hydrolyze phosphatidylinositol (1,2-diacyl-sn-glycero-3-phospho-(1D-myo-inositol), PI), as well as a range of other glycerophospholipid substrates such as phosphatidylcholine (1,2-diacyl-sn-glycero-3-phosphocholine, PC), phosphatidylethanolamine (1,2-diacyl-sn-glycero-3-phosphoethanolamine, PE), phosphatidylserine (1,2-diacyl-sn-glycero-3-phospho-L-serine, PS) and phosphatidylglycerol (1,2-diacyl-sn-glycero-3-phospho-(1'-sn-glycerol), PG). Involved in the regulation of the endogenous content of polyunsaturated PI and PS lipids in the nervous system. Changes in these lipids extend to downstream metabolic products like PI phosphates PIP and PIP2, which play fundamental roles in cell biology. Regulates mitochondrial morphology. These dynamic changes may be due to PA hydrolysis at the mitochondrial surface. May play a regulatory role in spermatogenesis or sperm function. This Homo sapiens (Human) protein is Phospholipase DDHD1.